A 1006-amino-acid chain; its full sequence is MDVRCINWFESHGENRFLYLKSRCRNGETVFIRFPHYFYYVVTDEIYQSLSPPPFNARPLGKMRTIDIDETISYNLDIKDRKCSVADMWLIEEPKKRSIQNATMDEFLNISWFYISNGISPDGCYSLDEQYLTKINNGCYHCDDPRNCFAKKIPRFDIPRSYLFLDIECHFDKKFPSVFINPISHTSYCYIDLSGKRLLFTLINEEMLTEQEIQEAVDRGCLRIQSLMEMDYERELVLCSEIVLLRIAKQLLELTFDYVVTFNGHNFDLRYITNRLELLTGEKIIFRSPDKKEAVHLCIYERNQSSHKGVGGMANTTFHVNNNNGTIFFDLYSFIQKSEKLDSYKLDSISKNAFSCMGKVLNRGVREMTFIGDDTTDAKGKAAAFAKVLTTGNYVTVDEDIICKVIRKDIWENGFKVVLLCPTLPNDTYKLSFGKDDVDLAQMYKDYNLNIALDMARYCIHDACLCQYLWEYYGVETKTDAGASTYVLPQSMVFEYRASTVIKGPLLKLLLETKTILVRSETKQKFPYEGGKVFAPKQKMFSNNVLIFDYNSLYPNVCIFGNLSPETLVGVVVSTNRLEEEINNQLLLQKYPPPRYITVHCEPRLPNLISEIAIFDRSIEGTIPRLLRTFLAERARYKKMLKQATSSTEKAIYDSMQYTYKIVANSVYGLMGFRNSALYSYASAKSCTSIGRRMILYLESVLNGAELSNGMLRFANPLSNPFYMDDRDINPIVKTSLPIDYRFRFRSVYGDTDSVFTEIDSQDVDKSIEIAKELERLINNRVLFNNFKIEFEAVYKNLIMQSKKKYTTMKYSASSNSKSVPERINKGTSETRRDVSKFHKNMIKTYKTRLSEMLSEGRMNSNQVCIDILRSLETDLRSEFDSRSSPLELFMLSRMHHSNYKSADNPNMYLVTEYNKNNPETIELGERYYFAYICPANVPWTKKLVNIKTYETIIDRSFKLGSDQRIFYEVYFKRLTSEIVNLLDNKVLCISFFERMFGSKPTFYEA.

It belongs to the DNA polymerase type-B family. Interacts with OPG148. Component of the Uracil-DNA glycosylase(UDG)-OPG148-polymerase complex; OPG148 and OPG116/UDG form a heterodimeric processivity factor that associates with OPG071 to form the processive polymerase holoenzyme.

It catalyses the reaction DNA(n) + a 2'-deoxyribonucleoside 5'-triphosphate = DNA(n+1) + diphosphate. In terms of biological role, catalyzes DNA synthesis. Acquires processivity by associating with a heterodimeric processivity factor comprised of the viral OPG148 and OPG116 proteins, thereby forming the DNA polymerase holoenzyme. Displays 3'- to 5' exonuclease activity. Might participate in viral DNA recombination. Does not perform OPG116/D4synthesis across an abasic site. The chain is DNA polymerase (OPG071) from Homo sapiens (Human).